Reading from the N-terminus, the 72-residue chain is Translation initiation factor IF-1 (72 aa).

Residues 1–72 enclose the S1-like domain; sequence MSKEDMIEFS…TKGRITFRFK (72 aa).

Belongs to the IF-1 family. Component of the 30S ribosomal translation pre-initiation complex which assembles on the 30S ribosome in the order IF-2 and IF-3, IF-1 and N-formylmethionyl-tRNA(fMet); mRNA recruitment can occur at any time during PIC assembly.

The protein localises to the cytoplasm. One of the essential components for the initiation of protein synthesis. Stabilizes the binding of IF-2 and IF-3 on the 30S subunit to which N-formylmethionyl-tRNA(fMet) subsequently binds. Helps modulate mRNA selection, yielding the 30S pre-initiation complex (PIC). Upon addition of the 50S ribosomal subunit IF-1, IF-2 and IF-3 are released leaving the mature 70S translation initiation complex. This chain is Translation initiation factor IF-1, found in Granulibacter bethesdensis (strain ATCC BAA-1260 / CGDNIH1).